A 1177-amino-acid polypeptide reads, in one-letter code: Zinc finger CCCH domain-containing protein 6 (1177 aa).

Residues 1–12 (MTDSEHAGHDRE) show a composition bias toward basic and acidic residues. Disordered stretches follow at residues 1–137 (MTDS…SKEY) and 179–206 (QESS…TEYR). Residues 13–31 (DGELEDGEIDDAGFEETQD) are compositionally biased toward acidic residues. The stretch at 27–73 (EETQDQEAKENEKQKNEKAYRKSRKKHKKEREKKKSKRRKHEKHKHN) forms a coiled coil. A compositionally biased stretch (basic and acidic residues) spans 32–46 (QEAKENEKQKNEKAY). Residues 47-73 (RKSRKKHKKEREKKKSKRRKHEKHKHN) are compositionally biased toward basic residues. Positions 179–188 (QESSGSSFSK) are enriched in low complexity. 3 consecutive C3H1-type zinc fingers follow at residues 271–297 (KGKQ…HDAE), 299–326 (EKKK…HSEF), and 327–350 (PCKF…HDDL). The stretch at 347–383 (HDDLTKETRKLLDKVLNADEELVNEDERELEELRKRG) forms a coiled coil. 8 disordered regions span residues 383–416 (GITP…FETD), 446–587 (PPAF…ESMQ), 622–654 (QQQP…SASG), 670–767 (RYQE…KKPH), 780–826 (PKKL…SERE), 942–988 (EQSG…SSRS), 1043–1101 (DPRD…PVDG), and 1132–1162 (LLRP…DKPL). A compositionally biased stretch (low complexity) spans 493-502 (HPGSPGHHPC). Composition is skewed to polar residues over residues 512 to 522 (ENPSLLPSSSE) and 564 to 587 (SSPA…ESMQ). The segment covering 713-728 (RTLQKQTGTLRNQQLP) has biased composition (polar residues). Basic and acidic residues predominate over residues 753 to 767 (PRLRTVPRQDIKKPH). Residues 955-967 (GDPRLQKNFDPRL) are compositionally biased toward basic and acidic residues. Composition is skewed to polar residues over residues 1050–1064 (LSAT…GENT) and 1077–1093 (KNQP…NTTA). Ser-1150 is subject to Phosphoserine.

This Mus musculus (Mouse) protein is Zinc finger CCCH domain-containing protein 6 (Zc3h6).